Reading from the N-terminus, the 1645-residue chain is Thrombospondin type-1 domain-containing protein 7A (1645 aa).

A signal peptide spans 1-38 (MGLRAGRLASPSRGVLQLLRLPLLLLLLLSSGARGAAA). The Extracellular segment spans residues 39 to 1595 (QGDTEVPTLY…FGPDGRLKTW (1557 aa)). TSP type-1 domains lie at 46 to 105 (TLYL…KVCD), 109 to 181 (ELYD…IPCQ), and 183 to 236 (DCIV…NPCE). N-linked (GlcNAc...) asparagine glycosylation is present at Asn223. The interval 255 to 300 (PHTRQARQARRRGKNKEREKERGKAVKDPEARELIKKKRNRNRQNR) is disordered. A coiled-coil region spans residues 256–304 (HTRQARQARRRGKNKEREKERGKAVKDPEARELIKKKRNRNRQNRQENR). Residues 258 to 269 (RQARQARRRGKN) are compositionally biased toward basic residues. A compositionally biased stretch (basic and acidic residues) spans 270-288 (KEREKERGKAVKDPEAREL). Residues 289–298 (IKKKRNRNRQ) are compositionally biased toward basic residues. N-linked (GlcNAc...) asparagine glycosylation occurs at Asn321. TSP type-1 domains follow at residues 349-405 (ECQV…VSQG), 412-499 (ATYG…VPCP), 501-563 (ECEV…PSCY), 623-684 (DCVL…HPCT), 685-758 (VYHW…LPCR), 760-820 (DCVV…PTCH), 821-893 (SYRW…IPCQ), 895-948 (DCQF…CPCD), 949-1022 (KYNA…IPCP), 1024-1084 (DCKL…SDCN), 1085-1152 (QYIW…LPCP), 1154-1208 (DCVI…KNCY), 1209-1272 (HYDY…VECP), 1274-1329 (NCQL…KPCY), 1330-1400 (RWQY…QPCP), and 1402-1463 (DCYL…GQCY). 3 disulfides stabilise this stretch: Cys424/Cys494, Cys444/Cys498, and Cys455/Cys483. Asn439 carries an N-linked (GlcNAc...) asparagine glycan. N-linked (GlcNAc...) asparagine glycosylation occurs at Asn489. 2 disulfide bridges follow: Cys624-Cys666 and Cys635-Cys639. An N-linked (GlcNAc...) asparagine glycan is attached at Asn668. 7 cysteine pairs are disulfide-bonded: Cys678–Cys683, Cys696–Cys753, Cys717–Cys757, Cys728–Cys741, Cys761–Cys803, Cys772–Cys776, and Cys813–Cys819. N-linked (GlcNAc...) asparagine glycosylation is present at Asn706. A glycan (N-linked (GlcNAc...) asparagine) is linked at Asn957. 6 disulfides stabilise this stretch: Cys961–Cys1017, Cys983–Cys1021, Cys994–Cys1007, Cys1025–Cys1062, Cys1036–Cys1040, and Cys1079–Cys1083. A glycan (N-linked (GlcNAc...) asparagine) is linked at Asn1032. Cysteines 1201 and 1207 form a disulfide. Asn1213 is a glycosylation site (N-linked (GlcNAc...) asparagine). Cystine bridges form between Cys1220/Cys1267, Cys1228/Cys1271, Cys1239/Cys1252, Cys1275/Cys1313, Cys1286/Cys1290, Cys1323/Cys1328, Cys1339/Cys1395, Cys1346/Cys1399, Cys1357/Cys1376, Cys1403/Cys1447, Cys1414/Cys1418, and Cys1457/Cys1462. Asn1264 carries N-linked (GlcNAc...) asparagine glycosylation. A glycan (N-linked (GlcNAc...) asparagine) is linked at Asn1354. N-linked (GlcNAc...) asparagine glycans are attached at residues Asn1488 and Asn1535. A helical transmembrane segment spans residues 1596-1616 (VYGVAAGAFVLLVFIVSMIYL). Residues 1617 to 1645 (ACKKPKKPQRRQNNRLKPLTLAYDGDADM) lie on the Cytoplasmic side of the membrane.

In terms of processing, proteolytic cleavage in the extracellular region generates a 210 kDa soluble form. Post-translationally, extensively N-glycosylated. In terms of tissue distribution, detected on kidney podocytes along the glomerular capillary wall (at protein level).

The protein resides in the cell membrane. The protein localises to the cell projection. It is found in the secreted. Plays a role in actin cytoskeleton rearrangement. Its function is as follows. The soluble form promotes endothelial cell migration and filopodia formation during sprouting angiogenesis via a FAK-dependent mechanism. The protein is Thrombospondin type-1 domain-containing protein 7A (Thsd7a) of Mus musculus (Mouse).